The sequence spans 284 residues: Pantothenate synthetase (284 aa).

32–39 (MGALHDGH) is a binding site for ATP. H39 acts as the Proton donor in catalysis. Residue Q63 coordinates (R)-pantoate. Position 63 (Q63) interacts with beta-alanine. 149 to 152 (GEKD) contributes to the ATP binding site. Q155 contributes to the (R)-pantoate binding site. ATP-binding positions include I178 and 186 to 189 (MSSR).

Belongs to the pantothenate synthetase family. In terms of assembly, homodimer.

It is found in the cytoplasm. The enzyme catalyses (R)-pantoate + beta-alanine + ATP = (R)-pantothenate + AMP + diphosphate + H(+). It participates in cofactor biosynthesis; (R)-pantothenate biosynthesis; (R)-pantothenate from (R)-pantoate and beta-alanine: step 1/1. In terms of biological role, catalyzes the condensation of pantoate with beta-alanine in an ATP-dependent reaction via a pantoyl-adenylate intermediate. In Roseobacter denitrificans (strain ATCC 33942 / OCh 114) (Erythrobacter sp. (strain OCh 114)), this protein is Pantothenate synthetase.